Here is a 153-residue protein sequence, read N- to C-terminus: Aspartate carbamoyltransferase regulatory chain (153 aa).

Residues Cys108, Cys113, Cys137, and Cys140 each coordinate Zn(2+).

It belongs to the PyrI family. As to quaternary structure, contains catalytic and regulatory chains. Zn(2+) is required as a cofactor.

Its function is as follows. Involved in allosteric regulation of aspartate carbamoyltransferase. This is Aspartate carbamoyltransferase regulatory chain from Methanosphaera stadtmanae (strain ATCC 43021 / DSM 3091 / JCM 11832 / MCB-3).